We begin with the raw amino-acid sequence, 527 residues long: Probable pectinesterase/pectinesterase inhibitor 32 (527 aa).

Residues 1-24 form the signal peptide; that stretch reads MAKFRQMGSSIFFLFLIIISLCSA. Positions 25–165 are pectinesterase inhibitor 32; that stretch reads HKEAFSSTDL…GTTVRNLLTM (141 aa). N-linked (GlcNAc...) asparagine glycosylation is found at Asn-110, Asn-209, Asn-224, and Asn-280. The tract at residues 214–511 is pectinesterase 32; it reads DAVVAADGTG…FTVSQLIQGN (298 aa). 2 residues coordinate substrate: Thr-289 and Gln-319. Asp-342 (proton donor; for pectinesterase activity) is an active-site residue. Cys-356 and Cys-376 form a disulfide bridge. Residue Asp-363 is the Nucleophile; for pectinesterase activity of the active site. Asn-423 is a glycosylation site (N-linked (GlcNAc...) asparagine). 2 residues coordinate substrate: Arg-431 and Trp-433. N-linked (GlcNAc...) asparagine glycans are attached at residues Asn-494 and Asn-501.

It in the N-terminal section; belongs to the PMEI family. In the C-terminal section; belongs to the pectinesterase family. Expressed in siliques.

Its subcellular location is the secreted. It localises to the cell wall. It carries out the reaction [(1-&gt;4)-alpha-D-galacturonosyl methyl ester](n) + n H2O = [(1-&gt;4)-alpha-D-galacturonosyl](n) + n methanol + n H(+). It functions in the pathway glycan metabolism; pectin degradation; 2-dehydro-3-deoxy-D-gluconate from pectin: step 1/5. Its function is as follows. Acts in the modification of cell walls via demethylesterification of cell wall pectin. The protein is Probable pectinesterase/pectinesterase inhibitor 32 (PME32) of Arabidopsis thaliana (Mouse-ear cress).